A 318-amino-acid chain; its full sequence is NADH-ubiquinone oxidoreductase chain 1 (318 aa).

The next 8 membrane-spanning stretches (helical) occupy residues 2–22 (FTIN…FLTL), 70–90 (MFII…IPLP), 100–120 (LGVL…LWSG), 146–166 (LAII…STLI), 171–191 (HLWL…STLA), 222–242 (LFFM…TILF), 254–276 (LYTI…IRAS), and 294–314 (LPLT…TSSI).

This sequence belongs to the complex I subunit 1 family. As to quaternary structure, core subunit of respiratory chain NADH dehydrogenase (Complex I) which is composed of 45 different subunits.

The protein resides in the mitochondrion inner membrane. It carries out the reaction a ubiquinone + NADH + 5 H(+)(in) = a ubiquinol + NAD(+) + 4 H(+)(out). Its function is as follows. Core subunit of the mitochondrial membrane respiratory chain NADH dehydrogenase (Complex I) which catalyzes electron transfer from NADH through the respiratory chain, using ubiquinone as an electron acceptor. Essential for the catalytic activity and assembly of complex I. The polypeptide is NADH-ubiquinone oxidoreductase chain 1 (MT-ND1) (Ceratotherium simum (White rhinoceros)).